We begin with the raw amino-acid sequence, 117 residues long: Large ribosomal subunit protein uL18 (117 aa).

This sequence belongs to the universal ribosomal protein uL18 family. Part of the 50S ribosomal subunit; part of the 5S rRNA/L5/L18/L25 subcomplex. Contacts the 5S and 23S rRNAs.

Its function is as follows. This is one of the proteins that bind and probably mediate the attachment of the 5S RNA into the large ribosomal subunit, where it forms part of the central protuberance. In Klebsiella pneumoniae subsp. pneumoniae (strain ATCC 700721 / MGH 78578), this protein is Large ribosomal subunit protein uL18.